A 547-amino-acid chain; its full sequence is Chaperonin GroEL 1 (547 aa).

ATP contacts are provided by residues 29 to 32 (TLGP), 86 to 90 (DGTTT), G418, 482 to 484 (NAA), and D498.

This sequence belongs to the chaperonin (HSP60) family. In terms of assembly, forms a cylinder of 14 subunits composed of two heptameric rings stacked back-to-back. Interacts with the co-chaperonin GroES.

It is found in the cytoplasm. It catalyses the reaction ATP + H2O + a folded polypeptide = ADP + phosphate + an unfolded polypeptide.. In terms of biological role, together with its co-chaperonin GroES, plays an essential role in assisting protein folding. The GroEL-GroES system forms a nano-cage that allows encapsulation of the non-native substrate proteins and provides a physical environment optimized to promote and accelerate protein folding. This is Chaperonin GroEL 1 from Corynebacterium jeikeium (strain K411).